A 185-amino-acid polypeptide reads, in one-letter code: Urease accessory protein UreE (185 aa).

The interval 153–185 (LRANSAQGHGHSHSHSHDHHGYHHHGDGHWHKH) is disordered. Positions 162 to 175 (GHSHSHSHDHHGYH) are enriched in basic residues. The span at 176-185 (HHGDGHWHKH) shows a compositional bias: basic and acidic residues.

The protein belongs to the UreE family.

Its subcellular location is the cytoplasm. Involved in urease metallocenter assembly. Binds nickel. Probably functions as a nickel donor during metallocenter assembly. The polypeptide is Urease accessory protein UreE (Haemophilus influenzae (strain 86-028NP)).